Here is a 123-residue protein sequence, read N- to C-terminus: Fluoride-specific ion channel FluC (123 aa).

The next 4 membrane-spanning stretches (helical) occupy residues 7–27, 39–59, 68–88, and 101–121; these read LAVAAGGALGALFRFYLSGLL, MVNGLASFILGYLYGLLFWGF, FLGTGFCGGLSTFSTFSYETF, and LNVAANVFVTISLVFIGFLLA. 2 residues coordinate Na(+): glycine 75 and serine 78.

Belongs to the fluoride channel Fluc/FEX (TC 1.A.43) family.

It is found in the cell membrane. It carries out the reaction fluoride(in) = fluoride(out). With respect to regulation, na(+) is not transported, but it plays an essential structural role and its presence is essential for fluoride channel function. Its function is as follows. Fluoride-specific ion channel. Important for reducing fluoride concentration in the cell, thus reducing its toxicity. The protein is Fluoride-specific ion channel FluC of Thermococcus gammatolerans (strain DSM 15229 / JCM 11827 / EJ3).